The following is a 354-amino-acid chain: Ornithine transcarbamylase, mitochondrial (354 aa).

The transit peptide at 1–32 directs the protein to the mitochondrion; that stretch reads MLFHLRTLLNNAALRNGHNFVVRNFRCGQPLQ. Position 70 is an N6-acetyllysine; alternate (lysine 70). The residue at position 70 (lysine 70) is an N6-succinyllysine; alternate. Residue lysine 80 is modified to N6-succinyllysine. Residue lysine 88 is modified to N6-acetyllysine; alternate. At lysine 88 the chain carries N6-succinyllysine; alternate. Residue serine 133 is modified to Phosphoserine. N6-acetyllysine; alternate is present on residues lysine 144, lysine 221, lysine 231, and lysine 238. N6-succinyllysine; alternate occurs at positions 144, 221, 231, and 238. Lysine 243 bears the N6-acetyllysine mark. Aspartate 263 is a catalytic residue. Residues lysine 274 and lysine 289 each carry the N6-succinyllysine modification. The residue at position 292 (lysine 292) is an N6-acetyllysine; alternate. An N6-succinyllysine; alternate modification is found at lysine 292. Residue cysteine 303 is part of the active site. Lysine 307 bears the N6-acetyllysine; alternate mark. Lysine 307 is subject to N6-succinyllysine; alternate.

Belongs to the aspartate/ornithine carbamoyltransferase superfamily. OTCase family. As to quaternary structure, homotrimer. Acetylation at Lys-88 negatively regulates ornithine carbamoyltransferase activity in response to nutrient signals.

The protein localises to the mitochondrion matrix. The catalysed reaction is carbamoyl phosphate + L-ornithine = L-citrulline + phosphate + H(+). Its pathway is nitrogen metabolism; urea cycle; L-citrulline from L-ornithine and carbamoyl phosphate: step 1/1. With respect to regulation, negatively regulated by lysine acetylation. Functionally, catalyzes the second step of the urea cycle, the condensation of carbamoyl phosphate with L-ornithine to form L-citrulline. The urea cycle ensures the detoxification of ammonia by converting it to urea for excretion. This Bos taurus (Bovine) protein is Ornithine transcarbamylase, mitochondrial.